Reading from the N-terminus, the 149-residue chain is NADH-quinone oxidoreductase subunit I 1 (149 aa).

2 4Fe-4S ferredoxin-type domains span residues 51 to 82 (LKSFADTGTHKCIACGTCERMCPSNVIKVQGT) and 93 to 122 (THYVIDFTRCSLCGICVESCPTGTLQYSTE). The [4Fe-4S] cluster site is built by C62, C65, C68, C72, C102, C105, C108, and C112.

This sequence belongs to the complex I 23 kDa subunit family. In terms of assembly, NDH-1 is composed of 14 different subunits. Subunits NuoA, H, J, K, L, M, N constitute the membrane sector of the complex. Requires [4Fe-4S] cluster as cofactor.

It is found in the cell inner membrane. The enzyme catalyses a quinone + NADH + 5 H(+)(in) = a quinol + NAD(+) + 4 H(+)(out). In terms of biological role, NDH-1 shuttles electrons from NADH, via FMN and iron-sulfur (Fe-S) centers, to quinones in the respiratory chain. The immediate electron acceptor for the enzyme in this species is believed to be ubiquinone. Couples the redox reaction to proton translocation (for every two electrons transferred, four hydrogen ions are translocated across the cytoplasmic membrane), and thus conserves the redox energy in a proton gradient. The sequence is that of NADH-quinone oxidoreductase subunit I 1 from Syntrophobacter fumaroxidans (strain DSM 10017 / MPOB).